The following is a 178-amino-acid chain: Bifunctional protein PyrR (178 aa).

The PRPP-binding signature appears at 97-109 (VVLVDDVLYTGRT).

It belongs to the purine/pyrimidine phosphoribosyltransferase family. PyrR subfamily.

The catalysed reaction is UMP + diphosphate = 5-phospho-alpha-D-ribose 1-diphosphate + uracil. Its function is as follows. Regulates the transcription of the pyrimidine nucleotide (pyr) operon in response to exogenous pyrimidines. In terms of biological role, also displays a weak uracil phosphoribosyltransferase activity which is not physiologically significant. This chain is Bifunctional protein PyrR, found in Herpetosiphon aurantiacus (strain ATCC 23779 / DSM 785 / 114-95).